The following is a 122-amino-acid chain: Large ribosomal subunit protein bL12 (122 aa).

Belongs to the bacterial ribosomal protein bL12 family. As to quaternary structure, homodimer. Part of the ribosomal stalk of the 50S ribosomal subunit. Forms a multimeric L10(L12)X complex, where L10 forms an elongated spine to which 2 to 4 L12 dimers bind in a sequential fashion. Binds GTP-bound translation factors.

Its function is as follows. Forms part of the ribosomal stalk which helps the ribosome interact with GTP-bound translation factors. Is thus essential for accurate translation. The chain is Large ribosomal subunit protein bL12 from Vibrio campbellii (strain ATCC BAA-1116).